An 85-amino-acid chain; its full sequence is Dual endothelin-1/VEGF signal peptide receptor (85 aa).

The Extracellular segment spans residues 1–18; it reads MTMFKGSNEMKSRWNWGS. A helical membrane pass occupies residues 19 to 37; it reads ITCIICFTCVGSQLSMSSS. Topologically, residues 38–85 are cytoplasmic; sequence KASNFSGPLQLYQRELEIFIVLTDVPNYRLIKENSHLHTTIVDQGRTV.

N-glycosylated. In terms of tissue distribution, expressed in kidney. Expressed in endothelial cells.

It is found in the cell membrane. In terms of biological role, dual receptor for both endothelin-1 and the signal sequence of vascular endothelial growth factor A. Does not act as a receptor for angiotensin-2. Does not bind the VEGFA mature protein. May play a role in angiogenesis with a significant role in cardiovascular and neural development. The sequence is that of Dual endothelin-1/VEGF signal peptide receptor from Homo sapiens (Human).